The primary structure comprises 52 residues: Mitogenic lectin alpha chain (52 aa).

It belongs to the leguminous lectin family. In terms of assembly, tetramer of two alpha and two beta chains.

In Vicia sativa (Spring vetch), this protein is Mitogenic lectin alpha chain.